The primary structure comprises 71 residues: Glucose-repressible gene protein (71 aa).

A disordered region spans residues 19-71 (TATASKEANKDVAKDSNQGVGTRLNAAGDAISDKVSENKHDAKAEAHKQGATH). Over residues 49–71 (ISDKVSENKHDAKAEAHKQGATH) the composition is skewed to basic and acidic residues.

This chain is Glucose-repressible gene protein (grg-1), found in Neurospora crassa (strain ATCC 24698 / 74-OR23-1A / CBS 708.71 / DSM 1257 / FGSC 987).